Reading from the N-terminus, the 93-residue chain is WAP four-disulfide core domain protein 13 (93 aa).

An N-terminal signal peptide occupies residues 1–22 (MKPVLPLQFLVVFCLALQLVPG). Positions 24–73 (PKQRVLKYILEPPPCISAPENCTHLCTMQEDCEKGFQCCSSFCGIVCSSE) constitute a WAP; atypical domain. 3 cysteine pairs are disulfide-bonded: Cys45-Cys66, Cys49-Cys61, and Cys55-Cys70.

The protein localises to the secreted. Functionally, putative acid-stable proteinase inhibitor. The chain is WAP four-disulfide core domain protein 13 (WFDC13) from Homo sapiens (Human).